Here is a 311-residue protein sequence, read N- to C-terminus: JNK1/MAPK8-associated membrane protein (311 aa).

The Lumenal segment spans residues 1-57 (MAVDIQPACLGLYCGKTLLFKNGSSEIYGECGVCPRGQRTNAQKYCQPCTESPELYD). A glycan (N-linked (GlcNAc...) asparagine) is linked at Asn22. The helical transmembrane segment at 58-78 (WLYLGFMAMLPLVLHWFFIEW) threads the bilayer. Topologically, residues 79–87 (YSGKKSSSA) are cytoplasmic. Residues 88–108 (LFQHITALFECTMAAIITLLV) traverse the membrane as a helical segment. Residues 109 to 149 (SDPVGVLYIRSCRVLMLSDWYTMLYNPSPDYVTTVHCTHEA) are Lumenal-facing. Residues 150–170 (VYPLYTIVFVYYAFCLVLMML) traverse the membrane as a helical segment. Topologically, residues 171 to 188 (LRPLLVKKIACGLGKSDR) are cytoplasmic. Residues 189-209 (FKSIYAALYFFPILTVLQAVG) traverse the membrane as a helical segment. Position 210 (Gly210) is a topological domain, lumenal. Residues 211-231 (GLLYYAFPYIILVLSLVTLAV) traverse the membrane as a helical segment. Residues 232 to 250 (YMSASEIENCYDLLVRKKR) are Cytoplasmic-facing. The helical transmembrane segment at 251–271 (LIVLFSHWLLHAYGIVSISRV) threads the bilayer. Over 272–277 (DRLEHD) the chain is Lumenal. A helical membrane pass occupies residues 278 to 298 (LPLLALVPTPALFYLFTAKFT). At 299-311 (EPSRILSEGANGH) the chain is on the cytoplasmic side.

In terms of assembly, interacts with RNF5 and MAPK8, but not with MAPK9. Binding to MAPK8 occurs before and after exposure to stress, such as UV irradiation. After exposure to stress, interacts with phosphorylated MAPK8. Competes with DUSP10 for MAPK8 binding. Associates with multiple components of the proteasome and with ERAD regulatory proteins, including AMFR/GP78, CANX, PSMC1, PSMC2, PSMC3/TBP1, PSMC5, PSMC6, PSMD8, SEC61-ALPHA and UFD1. In terms of processing, ubiquitinated by RNF5 via 'Lys-63'-linked ubiquitin linkage in a UBE2N-dependent manner. Ubiquitination decreases association with components of the proteasome and ERAD. Expressed in numerous tissues, including brain, spleen, thymus, liver, kidney and testis.

The protein localises to the endoplasmic reticulum membrane. Its function is as follows. Regulates the duration of MAPK8 activity in response to various stress stimuli. Facilitates degradation of misfolded endoplasmic reticulum (ER) proteins through the recruitment of components of the proteasome and endoplasmic reticulum-associated degradation (ERAD) system. This Mus musculus (Mouse) protein is JNK1/MAPK8-associated membrane protein (Jkamp).